The chain runs to 149 residues: Transcriptional repressor NrdR (149 aa).

A zinc finger lies at 3–34 (CPFCSHSETQVVETRISEDGDSIRRRRQCASC). The region spanning 49 to 139 (PAIVKKDGRR…VYRSFEDIDE (91 aa)) is the ATP-cone domain.

This sequence belongs to the NrdR family. Zn(2+) serves as cofactor.

In terms of biological role, negatively regulates transcription of bacterial ribonucleotide reductase nrd genes and operons by binding to NrdR-boxes. The polypeptide is Transcriptional repressor NrdR (Albidiferax ferrireducens (strain ATCC BAA-621 / DSM 15236 / T118) (Rhodoferax ferrireducens)).